We begin with the raw amino-acid sequence, 322 residues long: 4-hydroxy-3-methylbut-2-enyl diphosphate reductase 1 (322 aa).

Cys-18 lines the [4Fe-4S] cluster pocket. The (2E)-4-hydroxy-3-methylbut-2-enyl diphosphate site is built by His-47 and His-82. Dimethylallyl diphosphate contacts are provided by His-47 and His-82. Isopentenyl diphosphate is bound by residues His-47 and His-82. Cys-104 serves as a coordination point for [4Fe-4S] cluster. His-132 provides a ligand contact to (2E)-4-hydroxy-3-methylbut-2-enyl diphosphate. His-132 is a binding site for dimethylallyl diphosphate. Isopentenyl diphosphate is bound at residue His-132. Glu-134 acts as the Proton donor in catalysis. Thr-173 contacts (2E)-4-hydroxy-3-methylbut-2-enyl diphosphate. Cys-203 is a [4Fe-4S] cluster binding site. Positions 231, 232, 233, and 276 each coordinate (2E)-4-hydroxy-3-methylbut-2-enyl diphosphate. Ser-231, Ser-232, Asn-233, and Ser-276 together coordinate dimethylallyl diphosphate. Residues Ser-231, Ser-232, Asn-233, and Ser-276 each coordinate isopentenyl diphosphate.

Belongs to the IspH family. [4Fe-4S] cluster is required as a cofactor.

It carries out the reaction isopentenyl diphosphate + 2 oxidized [2Fe-2S]-[ferredoxin] + H2O = (2E)-4-hydroxy-3-methylbut-2-enyl diphosphate + 2 reduced [2Fe-2S]-[ferredoxin] + 2 H(+). It catalyses the reaction dimethylallyl diphosphate + 2 oxidized [2Fe-2S]-[ferredoxin] + H2O = (2E)-4-hydroxy-3-methylbut-2-enyl diphosphate + 2 reduced [2Fe-2S]-[ferredoxin] + 2 H(+). Its pathway is isoprenoid biosynthesis; dimethylallyl diphosphate biosynthesis; dimethylallyl diphosphate from (2E)-4-hydroxy-3-methylbutenyl diphosphate: step 1/1. The protein operates within isoprenoid biosynthesis; isopentenyl diphosphate biosynthesis via DXP pathway; isopentenyl diphosphate from 1-deoxy-D-xylulose 5-phosphate: step 6/6. In terms of biological role, catalyzes the conversion of 1-hydroxy-2-methyl-2-(E)-butenyl 4-diphosphate (HMBPP) into a mixture of isopentenyl diphosphate (IPP) and dimethylallyl diphosphate (DMAPP). Acts in the terminal step of the DOXP/MEP pathway for isoprenoid precursor biosynthesis. This chain is 4-hydroxy-3-methylbut-2-enyl diphosphate reductase 1, found in Bradyrhizobium diazoefficiens (strain JCM 10833 / BCRC 13528 / IAM 13628 / NBRC 14792 / USDA 110).